A 1417-amino-acid polypeptide reads, in one-letter code: Cytoadherence-linked asexual protein 3.1 (1417 aa).

Residues 1–24 (MVSFFKTPIFILIIFLYLNEKVIC) form the signal peptide. 4 cysteine pairs are disulfide-bonded: C333–C361, C407–C413, C517–C545, and C521–C542. The helical transmembrane segment at 1204-1224 (LANGFMYAFCFFAISQMYAYF) threads the bilayer. The tract at residues 1383–1417 (TYIDTEKMNEADSADSDDEKDSDTPDDELMISRFH) is disordered. The span at 1394-1411 (DSADSDDEKDSDTPDDEL) shows a compositional bias: acidic residues.

As to quaternary structure, self-associates. Component of the RhopH complex. RhopH complex is at least composed of CLAG3.1/CLAG3.2, RhopH2 and RhopH3 with a 1:1:1 subunit stoichiometry. CLAG3.1/CLAG3.2 mediates subunit association through independent contacts with RhopH2 and RhopH3, which do not directly interact with one another. Interacts with RhopH2. Interacts with RhopH3.

It localises to the host cell membrane. Its subcellular location is the host cytoplasm. The protein localises to the cytoplasmic vesicle. The protein resides in the secretory vesicle. It is found in the rhoptry. In terms of biological role, participates in the formation of new permeability pathways in Plasmodium-infected erythrocytes enabling the uptake of nutrients from the blood plasma. The protein is Cytoadherence-linked asexual protein 3.1 of Plasmodium falciparum.